The chain runs to 147 residues: Endoribonuclease YbeY (147 aa).

Zn(2+)-binding residues include H107, H111, and H117.

Belongs to the endoribonuclease YbeY family. Zn(2+) serves as cofactor.

The protein localises to the cytoplasm. Its function is as follows. Single strand-specific metallo-endoribonuclease involved in late-stage 70S ribosome quality control and in maturation of the 3' terminus of the 16S rRNA. This Solibacter usitatus (strain Ellin6076) protein is Endoribonuclease YbeY.